The sequence spans 207 residues: UPF0319 protein VV1_2115 (207 aa).

Positions methionine 1–alanine 18 are cleaved as a signal peptide.

Belongs to the UPF0319 family.

In Vibrio vulnificus (strain CMCP6), this protein is UPF0319 protein VV1_2115.